The sequence spans 569 residues: IPGRTGRARAAVSVPPPAGEQVPTERLEPRVEERAGGYWVLKEKYRAGLNPQEKVKLEKEPMALFMEGGIQDLARVPMEQIDAAKLTKDDVDVRLKWLGLFHRRKHQYGRFMMRLKLPNGVTTSEQTRYLASVIEAYGADGCADVTTRQNWQIRGVTLPDVPAILDGLRAVGLTSLQSGMDNVRNPVGNPLAGVDPHEIVDTRPYTNLLSSYVTNNSQGNPTITNLPRKWNVCVIGSHDLYEHPHINDLAYMPAVKDGEFGFNLLVGGFISPKRWAEALPLDAWVAGDDVVPVCKAILEAYRDLGSRGNRQKTRMMWLIDELGMEVFRSEVEKRMPNGVLERAAPEDLVDKRWERRDYLGVHPQKQEGLSYVGLHVPVGRLQAADMFELARLADEYGTGELRLTVEQNIVLPNVSNERLDALLAEPLLQEQRLSPRPSMLLRGLVACTGNQFCGQAIIETKARALQVAREVEKRVAVPRPVRMHWTGCPNSCGQVQVADIGFMGCLTKDSDGKIVEAADIFVGGRVGSDSHLADVYRKSVPCKDLVPIVADLLVERFGAVPREREEDEE.

A chloroplast-targeting transit peptide spans 1 to 4 (IPGR). Positions 1–28 (IPGRTGRARAAVSVPPPAGEQVPTERLE) are disordered. Cysteine 447, cysteine 453, cysteine 488, and cysteine 492 together coordinate [4Fe-4S] cluster. Siroheme is bound at residue cysteine 492.

This sequence belongs to the nitrite and sulfite reductase 4Fe-4S domain family. Monomer. The cofactor is siroheme. Requires [4Fe-4S] cluster as cofactor.

The protein localises to the plastid. Its subcellular location is the chloroplast. It carries out the reaction 6 oxidized [2Fe-2S]-[ferredoxin] + NH4(+) + 2 H2O = nitrite + 6 reduced [2Fe-2S]-[ferredoxin] + 8 H(+). Its pathway is nitrogen metabolism; nitrate reduction (assimilation). In Zea mays (Maize), this protein is Ferredoxin--nitrite reductase, chloroplastic (NIR).